The sequence spans 116 residues: MAGFGLPNFGQLTEAFKKAKEIQQNAQKLQDELESMEIEGKSDDEMIKVWISGNQLPLRVEVKDTIAESNKEEIEKNILEAIKKAHETSTTTMKERMNDLTGGLNLNLPGLDNNDS.

Over residues 89–98 (STTTMKERMN) the composition is skewed to basic and acidic residues. Positions 89 to 116 (STTTMKERMNDLTGGLNLNLPGLDNNDS) are disordered. Over residues 99-116 (DLTGGLNLNLPGLDNNDS) the composition is skewed to low complexity.

This sequence belongs to the YbaB/EbfC family. As to quaternary structure, homodimer.

It is found in the cytoplasm. The protein localises to the nucleoid. Functionally, binds to DNA and alters its conformation. May be involved in regulation of gene expression, nucleoid organization and DNA protection. This chain is Nucleoid-associated protein P9515_00191, found in Prochlorococcus marinus (strain MIT 9515).